Consider the following 143-residue polypeptide: Hemoglobin subunit alpha (143 aa).

The Globin domain occupies 2–143 (TLSDKDKSTV…VALALAERYR (142 aa)). Position 60 (H60) interacts with O2. H89 lines the heme b pocket.

This sequence belongs to the globin family. Heterotetramer of two alpha chains and two beta chains. Red blood cells.

Functionally, involved in oxygen transport from gills to the various peripheral tissues. The protein is Hemoglobin subunit alpha (hba) of Thunnus thynnus (Atlantic bluefin tuna).